Here is a 152-residue protein sequence, read N- to C-terminus: Prefoldin subunit alpha (152 aa).

Residues glutamate 110 to glutamate 152 are disordered. Positions threonine 111–glutamate 124 are enriched in acidic residues. Residues leucine 125 to glutamate 152 show a composition bias toward low complexity.

The protein belongs to the prefoldin alpha subunit family. In terms of assembly, heterohexamer of two alpha and four beta subunits.

The protein resides in the cytoplasm. Functionally, molecular chaperone capable of stabilizing a range of proteins. Seems to fulfill an ATP-independent, HSP70-like function in archaeal de novo protein folding. This chain is Prefoldin subunit alpha, found in Halorubrum lacusprofundi (strain ATCC 49239 / DSM 5036 / JCM 8891 / ACAM 34).